A 196-amino-acid polypeptide reads, in one-letter code: GTP cyclohydrolase-2 (196 aa).

A GTP-binding site is contributed by 49 to 53 (RVHSE). Zn(2+) is bound by residues Cys-54, Cys-65, and Cys-67. GTP-binding positions include Gln-70, 92 to 94 (EGR), and Thr-114. Catalysis depends on Asp-126, which acts as the Proton acceptor. Arg-128 serves as the catalytic Nucleophile. GTP-binding residues include Thr-149 and Lys-154.

This sequence belongs to the GTP cyclohydrolase II family. In terms of assembly, homodimer. It depends on Zn(2+) as a cofactor.

The enzyme catalyses GTP + 4 H2O = 2,5-diamino-6-hydroxy-4-(5-phosphoribosylamino)-pyrimidine + formate + 2 phosphate + 3 H(+). It functions in the pathway cofactor biosynthesis; riboflavin biosynthesis; 5-amino-6-(D-ribitylamino)uracil from GTP: step 1/4. Its function is as follows. Catalyzes the conversion of GTP to 2,5-diamino-6-ribosylamino-4(3H)-pyrimidinone 5'-phosphate (DARP), formate and pyrophosphate. This is GTP cyclohydrolase-2 from Shigella boydii serotype 18 (strain CDC 3083-94 / BS512).